The sequence spans 630 residues: tRNA uridine 5-carboxymethylaminomethyl modification enzyme MnmG (630 aa).

Position 13 to 18 (13 to 18 (GGGHAG)) interacts with FAD. 273-287 (GPRYCPSIEDKVNRF) contributes to the NAD(+) binding site.

It belongs to the MnmG family. In terms of assembly, homodimer. Heterotetramer of two MnmE and two MnmG subunits. FAD serves as cofactor.

Its subcellular location is the cytoplasm. In terms of biological role, NAD-binding protein involved in the addition of a carboxymethylaminomethyl (cmnm) group at the wobble position (U34) of certain tRNAs, forming tRNA-cmnm(5)s(2)U34. This Teredinibacter turnerae (strain ATCC 39867 / T7901) protein is tRNA uridine 5-carboxymethylaminomethyl modification enzyme MnmG.